The chain runs to 337 residues: N-acetyl-gamma-glutamyl-phosphate reductase (337 aa).

C145 is a catalytic residue.

This sequence belongs to the NAGSA dehydrogenase family. Type 1 subfamily.

The protein localises to the cytoplasm. The enzyme catalyses N-acetyl-L-glutamate 5-semialdehyde + phosphate + NADP(+) = N-acetyl-L-glutamyl 5-phosphate + NADPH + H(+). The protein operates within amino-acid biosynthesis; L-arginine biosynthesis; N(2)-acetyl-L-ornithine from L-glutamate: step 3/4. Functionally, catalyzes the NADPH-dependent reduction of N-acetyl-5-glutamyl phosphate to yield N-acetyl-L-glutamate 5-semialdehyde. The polypeptide is N-acetyl-gamma-glutamyl-phosphate reductase (Methanosarcina barkeri (strain Fusaro / DSM 804)).